Here is a 317-residue protein sequence, read N- to C-terminus: tRNA dimethylallyltransferase (317 aa).

14–21 is a binding site for ATP; sequence GPTAVGKT. Residue 16 to 21 participates in substrate binding; the sequence is TAVGKT. The tract at residues 39-42 is interaction with substrate tRNA; the sequence is DSMQ.

The protein belongs to the IPP transferase family. In terms of assembly, monomer. Mg(2+) is required as a cofactor.

It carries out the reaction adenosine(37) in tRNA + dimethylallyl diphosphate = N(6)-dimethylallyladenosine(37) in tRNA + diphosphate. In terms of biological role, catalyzes the transfer of a dimethylallyl group onto the adenine at position 37 in tRNAs that read codons beginning with uridine, leading to the formation of N6-(dimethylallyl)adenosine (i(6)A). The polypeptide is tRNA dimethylallyltransferase (Bacillus cereus (strain AH187)).